Reading from the N-terminus, the 607-residue chain is Elongation factor 4 (607 aa).

The tr-type G domain maps to K11–S193. GTP-binding positions include D23–T28 and N140–D143.

It belongs to the TRAFAC class translation factor GTPase superfamily. Classic translation factor GTPase family. LepA subfamily.

The protein resides in the cell membrane. The catalysed reaction is GTP + H2O = GDP + phosphate + H(+). Functionally, required for accurate and efficient protein synthesis under certain stress conditions. May act as a fidelity factor of the translation reaction, by catalyzing a one-codon backward translocation of tRNAs on improperly translocated ribosomes. Back-translocation proceeds from a post-translocation (POST) complex to a pre-translocation (PRE) complex, thus giving elongation factor G a second chance to translocate the tRNAs correctly. Binds to ribosomes in a GTP-dependent manner. This Staphylococcus carnosus (strain TM300) protein is Elongation factor 4.